Consider the following 192-residue polypeptide: Adenylate kinase (192 aa).

An ATP-binding site is contributed by 10-18 (GVPGVGGTT).

The protein belongs to the archaeal adenylate kinase family. Monomer.

The protein localises to the cytoplasm. The catalysed reaction is AMP + ATP = 2 ADP. This is Adenylate kinase (adkA) from Methanothermococcus thermolithotrophicus (Methanococcus thermolithotrophicus).